A 157-amino-acid chain; its full sequence is 3-dehydroquinate dehydratase (157 aa).

Tyr-24 functions as the Proton acceptor in the catalytic mechanism. Positions 75, 81, and 88 each coordinate substrate. Residue His-101 is the Proton donor of the active site. Residues 102 to 103 and Arg-112 each bind substrate; that span reads LS.

The protein belongs to the type-II 3-dehydroquinase family. As to quaternary structure, homododecamer.

It carries out the reaction 3-dehydroquinate = 3-dehydroshikimate + H2O. It participates in metabolic intermediate biosynthesis; chorismate biosynthesis; chorismate from D-erythrose 4-phosphate and phosphoenolpyruvate: step 3/7. Functionally, catalyzes a trans-dehydration via an enolate intermediate. In Brucella abortus (strain S19), this protein is 3-dehydroquinate dehydratase.